A 66-amino-acid chain; its full sequence is MPKQKTHRASAKRFKRTGNGGLKRSNAYTSHRFHGKTKKQRRQLRKASMVSASDMKRIKQMLSQMK.

Basic residues-rich tracts occupy residues 1–16 (MPKQ…RFKR) and 31–45 (HRFH…RQLR). The segment at 1 to 52 (MPKQKTHRASAKRFKRTGNGGLKRSNAYTSHRFHGKTKKQRRQLRKASMVSA) is disordered.

This sequence belongs to the bacterial ribosomal protein bL35 family.

The sequence is that of Large ribosomal subunit protein bL35 from Ligilactobacillus salivarius (strain UCC118) (Lactobacillus salivarius).